Reading from the N-terminus, the 141-residue chain is Hemoglobin subunit alpha (141 aa).

A Globin domain is found at 1–141; sequence VLSPADKTNV…VSTVLTSKYR (141 aa). Phosphoserine is present on Ser3. An N6-succinyllysine modification is found at Lys7. Position 8 is a phosphothreonine (Thr8). Residue Lys11 is modified to N6-succinyllysine. Position 16 is an N6-acetyllysine; alternate (Lys16). N6-succinyllysine; alternate is present on Lys16. Tyr24 is modified (phosphotyrosine). A Phosphoserine modification is found at Ser35. Lys40 carries the post-translational modification N6-succinyllysine. Ser49 bears the Phosphoserine mark. His58 lines the O2 pocket. His87 contributes to the heme b binding site. Ser102 bears the Phosphoserine mark. Thr108 carries the post-translational modification Phosphothreonine. Phosphoserine occurs at positions 124 and 131. 2 positions are modified to phosphothreonine: Thr134 and Thr137. Ser138 is subject to Phosphoserine.

The protein belongs to the globin family. Heterotetramer of two alpha chains and two beta chains. As to expression, red blood cells.

Functionally, involved in oxygen transport from the lung to the various peripheral tissues. In terms of biological role, hemopressin acts as an antagonist peptide of the cannabinoid receptor CNR1. Hemopressin-binding efficiently blocks cannabinoid receptor CNR1 and subsequent signaling. The polypeptide is Hemoglobin subunit alpha (HBA) (Urocitellus parryii (Arctic ground squirrel)).